The sequence spans 321 residues: Isopenicillin N synthase (321 aa).

The segment at 1–42 is disordered; that stretch reads MPVLMPSADVPTIDISPQLFGTDPTPRRTSRGRSTRPARGSG. Residues Arg-87, Tyr-91, and Tyr-188 each coordinate isopenicillin N. Residues Arg-87, Tyr-91, Tyr-188, His-213, and Asp-215 each coordinate N-[(5S)-5-amino-5-carboxypentanoyl]-L-cysteinyl-D-valine. The Fe2OG dioxygenase domain maps to 179–287; the sequence is TLSAVSMIRY…RLSLPFFLHA (109 aa). Fe(2+)-binding residues include His-213, Asp-215, and His-269. A 2-oxoglutarate-binding site is contributed by Arg-278. Ser-280 provides a ligand contact to isopenicillin N. Residue Ser-280 participates in N-[(5S)-5-amino-5-carboxypentanoyl]-L-cysteinyl-D-valine binding.

This sequence belongs to the iron/ascorbate-dependent oxidoreductase family. Fe cation is required as a cofactor. The cofactor is L-ascorbate.

The catalysed reaction is N-[(5S)-5-amino-5-carboxypentanoyl]-L-cysteinyl-D-valine + O2 = isopenicillin N + 2 H2O. Its pathway is antibiotic biosynthesis; penicillin G biosynthesis; penicillin G from L-alpha-aminoadipate and L-cysteine and L-valine: step 2/3. Removes, in the presence of oxygen, 4 hydrogen atoms from delta-L-(alpha-aminoadipyl)-L-cysteinyl-D-valine (ACV) to form the azetidinone and thiazolidine rings of isopenicillin. The polypeptide is Isopenicillin N synthase (pcbC) (Streptantibioticus cattleyicolor (Streptomyces cattleya)).